A 449-amino-acid polypeptide reads, in one-letter code: Ribulose bisphosphate carboxylase large chain (449 aa).

An N6,N6,N6-trimethyllysine modification is found at lysine 7. 2 residues coordinate substrate: asparagine 116 and threonine 166. Lysine 168 (proton acceptor) is an active-site residue. Residue lysine 170 participates in substrate binding. Residues lysine 194, aspartate 196, and glutamate 197 each coordinate Mg(2+). At lysine 194 the chain carries N6-carboxylysine. Histidine 287 (proton acceptor) is an active-site residue. Substrate is bound by residues arginine 288, histidine 320, and serine 372.

It belongs to the RuBisCO large chain family. Type I subfamily. In terms of assembly, heterohexadecamer of 8 large chains and 8 small chains; disulfide-linked. The disulfide link is formed within the large subunit homodimers. The cofactor is Mg(2+). The disulfide bond which can form in the large chain dimeric partners within the hexadecamer appears to be associated with oxidative stress and protein turnover.

The protein localises to the plastid. The protein resides in the chloroplast. It carries out the reaction 2 (2R)-3-phosphoglycerate + 2 H(+) = D-ribulose 1,5-bisphosphate + CO2 + H2O. It catalyses the reaction D-ribulose 1,5-bisphosphate + O2 = 2-phosphoglycolate + (2R)-3-phosphoglycerate + 2 H(+). RuBisCO catalyzes two reactions: the carboxylation of D-ribulose 1,5-bisphosphate, the primary event in carbon dioxide fixation, as well as the oxidative fragmentation of the pentose substrate in the photorespiration process. Both reactions occur simultaneously and in competition at the same active site. The protein is Ribulose bisphosphate carboxylase large chain of Aspidistra elatior (Cast-iron plant).